A 239-amino-acid chain; its full sequence is Octanoyl-[acyl-carrier-protein]:protein N-octanoyltransferase LIPT2, mitochondrial (239 aa).

A mitochondrion-targeting transit peptide spans 1-18 (MSVPVLRVRRLGLVGYAE). The BPL/LPL catalytic domain occupies 37-217 (GSPGGALLLC…AFEEEFQCQL (181 aa)). Residues 81 to 88 (RGGLITFH), 147 to 149 (AIG), and 160 to 162 (GLA) contribute to the substrate site. Residue Cys-178 is the Acyl-thioester intermediate of the active site. The segment at 220–239 (EQNPEQNPVQNRPDRDAGPL) is disordered.

The protein belongs to the LipB family.

It is found in the mitochondrion. The enzyme catalyses octanoyl-[ACP] + L-lysyl-[protein] = N(6)-octanoyl-L-lysyl-[protein] + holo-[ACP] + H(+). Its pathway is protein modification; protein lipoylation via endogenous pathway; protein N(6)-(lipoyl)lysine from octanoyl-[acyl-carrier-protein]: step 1/2. Its function is as follows. Catalyzes the transfer of endogenously produced octanoic acid from octanoyl-acyl-carrier-protein (octanoyl-ACP) onto the lipoyl domains of lipoate-dependent enzymes such as the protein H of the glycine cleavage system (GCSH). Lipoyl-ACP can also act as a substrate although octanoyl-ACP is likely to be the physiological substrate. This chain is Octanoyl-[acyl-carrier-protein]:protein N-octanoyltransferase LIPT2, mitochondrial (lipt2), found in Xenopus tropicalis (Western clawed frog).